We begin with the raw amino-acid sequence, 99 residues long: uncharacterized protein (99 aa).

This is an uncharacterized protein from Lepidoptera (butterflies and moths).